A 496-amino-acid chain; its full sequence is Probable cytosol aminopeptidase (496 aa).

Lys258 and Asp263 together coordinate Mn(2+). Residue Lys270 is part of the active site. The Mn(2+) site is built by Asp281, Asp340, and Glu342. Arg344 is a catalytic residue.

It belongs to the peptidase M17 family. Mn(2+) is required as a cofactor.

The protein resides in the cytoplasm. The catalysed reaction is Release of an N-terminal amino acid, Xaa-|-Yaa-, in which Xaa is preferably Leu, but may be other amino acids including Pro although not Arg or Lys, and Yaa may be Pro. Amino acid amides and methyl esters are also readily hydrolyzed, but rates on arylamides are exceedingly low.. The enzyme catalyses Release of an N-terminal amino acid, preferentially leucine, but not glutamic or aspartic acids.. Its function is as follows. Presumably involved in the processing and regular turnover of intracellular proteins. Catalyzes the removal of unsubstituted N-terminal amino acids from various peptides. This Helicobacter pylori (strain HPAG1) protein is Probable cytosol aminopeptidase.